We begin with the raw amino-acid sequence, 772 residues long: NAD(P)H-quinone oxidoreductase subunit 5, chloroplastic (772 aa).

16 helical membrane-spanning segments follow: residues 9-29, 40-60, 89-109, 125-145, 147-167, 185-205, 220-240, 259-279, 290-312, 328-348, 355-375, 397-417, 426-446, 550-570, 604-624, and 731-751; these read WIIPFIPLPVPILIGMGLLLF, WSFPSILLLSMVMLLSVYLSI, IDPLASIMLILITTVGILVLF, FAYLSFFNTSMLGLVTSSNLI, IYIFWELVGMCSYLLIGFWFT, GDFGLLLGILGLYWITGSFEF, NQVHFLFVTLCSFLLFAGAVA, TPISALIHAATMVAAGIFLVA, YIMNLISLIGIITVLLGATLALA, LGYMMLALGMGSYRAALFHLI, ALLFLGSGSIIHSMESIVGYS, TAFLVGTLSLCGIPPLACFWS, WLYSPIFAIIACSTAGFTAFY, LFSLFVLVLFTLFVAAIGIPF, FVTNASFSVSIALLGIFIATF, and IFIFIFLLMDSFFTNLPFFVL.

This sequence belongs to the complex I subunit 5 family. NDH is composed of at least 16 different subunits, 5 of which are encoded in the nucleus.

Its subcellular location is the plastid. The protein resides in the chloroplast thylakoid membrane. The enzyme catalyses a plastoquinone + NADH + (n+1) H(+)(in) = a plastoquinol + NAD(+) + n H(+)(out). It catalyses the reaction a plastoquinone + NADPH + (n+1) H(+)(in) = a plastoquinol + NADP(+) + n H(+)(out). NDH shuttles electrons from NAD(P)H:plastoquinone, via FMN and iron-sulfur (Fe-S) centers, to quinones in the photosynthetic chain and possibly in a chloroplast respiratory chain. The immediate electron acceptor for the enzyme in this species is believed to be plastoquinone. Couples the redox reaction to proton translocation, and thus conserves the redox energy in a proton gradient. The polypeptide is NAD(P)H-quinone oxidoreductase subunit 5, chloroplastic (ndhF) (Oenothera argillicola (Appalachian evening primrose)).